The following is a 210-amino-acid chain: uncharacterized protein (210 aa).

It to E.coli YkgK.

This is an uncharacterized protein from Escherichia coli (strain K12).